Here is a 152-residue protein sequence, read N- to C-terminus: Deoxyuridine 5'-triphosphate nucleotidohydrolase (152 aa).

Residues 71–73 (RSG), Asn84, 88–90 (LID), and Met98 contribute to the substrate site.

Belongs to the dUTPase family. The cofactor is Mg(2+).

It carries out the reaction dUTP + H2O = dUMP + diphosphate + H(+). The protein operates within pyrimidine metabolism; dUMP biosynthesis; dUMP from dCTP (dUTP route): step 2/2. In terms of biological role, this enzyme is involved in nucleotide metabolism: it produces dUMP, the immediate precursor of thymidine nucleotides and it decreases the intracellular concentration of dUTP so that uracil cannot be incorporated into DNA. The protein is Deoxyuridine 5'-triphosphate nucleotidohydrolase of Shewanella sp. (strain MR-7).